We begin with the raw amino-acid sequence, 474 residues long: MDVHTNNWRYFHHGCDVMAHLVIPEDLIEGLYAEDRPKIFSCTLKVIDYQTNLVSEPVIVWARSIDHRHTVGTLTSGIALSIPLLLTNDTWHPFNIILLRFAETANHNACYVRFFYQTIFSGLIKAGAPPVEEVNHPPVELPPREDPLVNILQGRSGRQFPATEESTNDHTASQKLVIGEAASAYLNHRALERSPSLRGALAGEIFSSSGASNLSGSVPPANRQARRTALVNLVGTKDFTKDMLRLLPLTHCLSGKRFWLCMYNPEGYKNLVSCLNHLSEDELKKINPLSIIQQDTSFLTLKMNQFVDSLLEECRAANFRMQQVLGVAIRSDASNALEYVQEQFYEACFTLRCATNENSGWVKAAVATQSRKQGVWLDVISLWDQGVGSWGVSLKLPNPLPGLHTLACIQQLSCQLEGKHKYLLESVCAKDDQIAVLHSHTLNAWLLLPGGFAIKGKFTHSEKDLLHISSRYGV.

This sequence belongs to the herpesviridae CVC1 protein family. Interacts (via C-terminus) with capsid vertex component 2/CVC2.

The protein resides in the virion. It is found in the host nucleus. Its function is as follows. Capsid vertex-specific component that plays a role during viral DNA encapsidation, assuring correct genome cleavage and presumably stabilizing capsids that contain full-length viral genomes. This Alcelaphine herpesvirus 1 (strain C500) (AlHV-1) protein is Capsid vertex component 1.